The sequence spans 887 residues: Putative RNA-binding protein 15B (887 aa).

Residues 1 to 132 are disordered; sequence MKRQSERDSS…EPAGPGSTAA (132 aa). Residues 10 to 20 show a composition bias toward low complexity; that stretch reads SPSGRGSSSSA. Basic and acidic residues-rich tracts occupy residues 22 to 34 and 65 to 77; these read RPRE…EAGG and GHRD…DANH. Over residues 83–94 the composition is skewed to gly residues; sequence RSSGAPGGGGRT. The span at 95-110 shows a compositional bias: low complexity; sequence GKASGDPGAGGASPRA. Residues serine 107 and serine 111 each carry the phosphoserine modification. Positions 111–122 are enriched in pro residues; it reads SPLPPPPPPPGA. Residues 123–132 are compositionally biased toward low complexity; that stretch reads EPAGPGSTAA. The region spanning 136–216 is the RRM 1 domain; the sequence is KTLLISSLSP…RPLKVEPVYL (81 aa). Lysine 210 is covalently cross-linked (Glycyl lysine isopeptide (Lys-Gly) (interchain with G-Cter in SUMO2)). Positions 215 to 249 are disordered; the sequence is YLRGGGSSRRSSSSSAAASTPPPGPPAPADPLGYL. The segment covering 222–233 has biased composition (low complexity); it reads SRRSSSSSAAAS. The segment covering 234-243 has biased composition (pro residues); that stretch reads TPPPGPPAPA. Phosphoserine is present on residues serine 261 and serine 263. RRM domains follow at residues 333-410 and 414-488; these read RNLF…YGKA and TRLW…FAKA. Threonine 529 carries the phosphothreonine modification. Serine 549, serine 553, and serine 559 each carry phosphoserine. The tract at residues 549-703 is disordered; the sequence is SLSKSSDRRN…TLEEPKHETK (155 aa). Composition is skewed to basic and acidic residues over residues 570 to 613, 623 to 643, and 668 to 700; these read RSGE…ERSR, RGSD…EGTK, and EAPD…EPKH. The Nuclear localization signal motif lies at 590–594; sequence RRKRR. Lysine 699 is covalently cross-linked (Glycyl lysine isopeptide (Lys-Gly) (interchain with G-Cter in SUMO2)). One can recognise an SPOC domain in the interval 708–886; it reads LSEYAQTLQL…HMVIVIVRDT (179 aa). Residues 719 to 887 form an interaction with Epstein-Barr virus BMLF1 region; the sequence is WNGLLVLKNS…MVIVIVRDTA (169 aa).

This sequence belongs to the RRM Spen family. In terms of assembly, component of the WMM complex, a N6-methyltransferase complex composed of a catalytic subcomplex, named MAC, and of an associated subcomplex, named MACOM. The MAC subcomplex is composed of METTL3 and METTL14. The MACOM subcomplex is composed of WTAP, ZC3H13, CBLL1/HAKAI, VIRMA, and, in some cases of RBM15 (RBM15 or RBM15B). May interact with NCOR2. Interacts with NXF1, the interaction is required to promote mRNA export.

It localises to the nucleus. Its subcellular location is the nucleoplasm. It is found in the nucleus speckle. The protein resides in the nucleus envelope. RNA-binding protein that acts as a key regulator of N6-methyladenosine (m6A) methylation of RNAs, thereby regulating different processes, such as alternative splicing of mRNAs and X chromosome inactivation mediated by Xist RNA. Associated component of the WMM complex, a complex that mediates N6-methyladenosine (m6A) methylation of RNAs, a modification that plays a role in the efficiency of mRNA splicing and RNA processing. Plays a key role in m6A methylation, possibly by binding target RNAs and recruiting the WMM complex. Involved in random X inactivation mediated by Xist RNA: acts by binding Xist RNA and recruiting the WMM complex, which mediates m6A methylation, leading to target YTHDC1 reader on Xist RNA and promoting transcription repression activity of Xist. Functions in the regulation of alternative or illicit splicing, possibly by regulating m6A methylation. Inhibits pre-mRNA splicing. Also functions as a mRNA export factor by acting as a cofactor for the nuclear export receptor NXF1. The chain is Putative RNA-binding protein 15B (Rbm15b) from Mus musculus (Mouse).